A 114-amino-acid chain; its full sequence is Cytochrome c oxidase subunit 7A2-like, mitochondrial (114 aa).

Residues 1–55 (MYYKFSGFTQKLAGAWASEAYSPQGLKPVVSTEAPPIIFATPTKLTSDSTVYDYA) constitute a mitochondrion transit peptide. Position 69 is an N6-acetyllysine (Lys-69). A helical transmembrane segment spans residues 82–107 (PDQMLYRTTMALTVGGTIYCLIALYM).

It belongs to the cytochrome c oxidase VIIa family. As to quaternary structure, interacts with the mitochondrial respiratory complexes III (CIII) and IV (CIV), promoting their association.

Its subcellular location is the mitochondrion inner membrane. Assembly factor that mediates the formation of some mitochondrial respiratory supercomplexes (respirasomes), thereby promoting oxidative phosphorylation and energy metabolism. Acts as a molecular adapter that associates with both mitochondrial respiratory complexes III (CIII) and IV (CIV), promoting their association. Mediates the formation of various mitochondrial respiratory supercomplexes, such as MCIII(2)IV(2), composed of two CIII and two CIV, and the CS-respirasome (MCI(1)III(2)IV(2)), composed of one CI, two CIII and two CIV. Not involved in the formation of the canonical respirasome (MCI(1)III(2)IV(1)), composed of one CI, two CIII and one CIV. The formation of different respirasomes is important for cell adaptation to oxygen conditions and prevent metabolic exhaustion: supercomplexes mediated by COX7A2L/SCAF1 are required to maintain oxidative phosphorylation upon low oxygen conditions and promote metabolic rewiring toward glycolysis. The sequence is that of Cytochrome c oxidase subunit 7A2-like, mitochondrial from Homo sapiens (Human).